The chain runs to 973 residues: Translation initiation factor IF-2 (973 aa).

Over residues 97-135 (GHIDLDGGQHKKQQEEPKAKEEPKVKEEPKVKEEPKVKE) the composition is skewed to basic and acidic residues. 2 disordered regions span residues 97-343 (GHID…EDVQ) and 353-372 (LTNK…DKRD). Residues 136–155 (APAAPAAQAPVKPAQPAQAP) are compositionally biased toward low complexity. 4 stretches are compositionally biased toward basic and acidic residues: residues 156 to 175 (TEKK…KTVE), 183 to 204 (PKVE…DDNL), 212 to 224 (LESK…KIDL), and 237 to 250 (TKEE…EKQK). A compositionally biased stretch (low complexity) spans 252–266 (NNNRPGNNSNGPGAP). 2 stretches are compositionally biased toward basic and acidic residues: residues 315–326 (PNRDDRPNNDRK) and 333–343 (VKAEVSEEDVQ). The 171-residue stretch at 472–642 (ARPPIVTVMG…LLEADLLDLK (171 aa)) folds into the tr-type G domain. Residues 481-488 (GHVDHGKT) form a G1 region. Residue 481–488 (GHVDHGKT) coordinates GTP. Residues 506-510 (GITQH) are G2. Residues 528–531 (DTPG) are G3. Residues 528–532 (DTPGH) and 582–585 (NKID) contribute to the GTP site. Positions 582-585 (NKID) are G4. The segment at 618-620 (SAK) is G5.

Belongs to the TRAFAC class translation factor GTPase superfamily. Classic translation factor GTPase family. IF-2 subfamily.

It localises to the cytoplasm. In terms of biological role, one of the essential components for the initiation of protein synthesis. Protects formylmethionyl-tRNA from spontaneous hydrolysis and promotes its binding to the 30S ribosomal subunits. Also involved in the hydrolysis of GTP during the formation of the 70S ribosomal complex. In Parabacteroides distasonis (strain ATCC 8503 / DSM 20701 / CIP 104284 / JCM 5825 / NCTC 11152), this protein is Translation initiation factor IF-2.